Reading from the N-terminus, the 824-residue chain is Acyl-homoserine lactone acylase QuiP (824 aa).

A signal peptide spans 1–26; the sequence is MASPALRHFLPRFGAAAAAASFLSLA. Residue S264 is the Nucleophile of the active site.

This sequence belongs to the peptidase S45 family. Heterodimer of an alpha subunit and a beta subunit processed from the same precursor.

The protein localises to the periplasm. The catalysed reaction is an N-acyl-L-homoserine lactone + H2O = L-homoserine lactone + a carboxylate. Its function is as follows. Catalyzes the deacylation of acyl-homoserine lactone (AHL or acyl-HSL), releasing homoserine lactone (HSL) and the corresponding fatty acid. Possesses a specificity for the degradation of long-chain acyl-HSLs (side chains of seven or more carbons in length). This chain is Acyl-homoserine lactone acylase QuiP (quiP), found in Pseudomonas syringae pv. tomato (strain ATCC BAA-871 / DC3000).